Reading from the N-terminus, the 351-residue chain is LIKELVNMVIQHAEEEEVKELKNPCECPRALHRVCGSDGNTYSNPCMLNCAKHEGNPDLVQVHKGPCDEHDHDFEDPCKCDNKFEPVCGDDQITYLNLCHLECATFTTSPGVEVAYEGECHAETTNAMEVLFQGNPCECPRALHRVCGSDGNTYSNPCMLTCAKHEGNPDLVQVHEGPCDEHDHDFEDTCQCDDTFQPVCGDDEITYRNLCHLECATFTTSPGVEVKHEGECHPETKVNQLILKSCMCPKIYKPVCGTDGRTYPNICVLKCHISSNPGLGLAHLGECKVAVLAKETGEVRNPCNCFRNFNPVCGTDGKTYGNLCMLGCAAETKVPGLKLLHNGRCLPKEQL.

A propeptide spanning residues 1–131 (LIKELVNMVI…AETTNAMEVL (131 aa)) is cleaved from the precursor. 6 Kazal-like domains span residues 19–69 (KELK…PCDE), 72–122 (HDFE…ECHA), 131–181 (LFQG…PCDE), 184–234 (HDFE…ECHP), 240–289 (QLIL…ECKV), and 297–347 (GEVR…RCLP). Cystine bridges form between C25/C50, C27/C46, C35/C67, C78/C103, C80/C99, C88/C120, C137/C162, C139/C158, C147/C179, C190/C215, C192/C211, C200/C232, C246/C271, C248/C267, C256/C287, C303/C328, C305/C324, and C313/C345.

Its subcellular location is the secreted. In terms of biological role, thrombin inhibitor. Prevents blood clotting to allow insect to feed on blood. Also functions as an inhibitor of trypsin and plasmin. The protein is Serine protease inhibitor dipetalogastin of Dipetalogaster maximus (Blood-sucking bug).